The chain runs to 232 residues: Phosphatidylserine decarboxylase proenzyme (232 aa).

Residue S190 is the Schiff-base intermediate with substrate; via pyruvic acid of the active site. S190 is modified (pyruvic acid (Ser); by autocatalysis).

This sequence belongs to the phosphatidylserine decarboxylase family. PSD-A subfamily. As to quaternary structure, heterodimer of a large membrane-associated beta subunit and a small pyruvoyl-containing alpha subunit. The cofactor is pyruvate. In terms of processing, is synthesized initially as an inactive proenzyme. Formation of the active enzyme involves a self-maturation process in which the active site pyruvoyl group is generated from an internal serine residue via an autocatalytic post-translational modification. Two non-identical subunits are generated from the proenzyme in this reaction, and the pyruvate is formed at the N-terminus of the alpha chain, which is derived from the carboxyl end of the proenzyme. The post-translation cleavage follows an unusual pathway, termed non-hydrolytic serinolysis, in which the side chain hydroxyl group of the serine supplies its oxygen atom to form the C-terminus of the beta chain, while the remainder of the serine residue undergoes an oxidative deamination to produce ammonia and the pyruvoyl prosthetic group on the alpha chain.

It is found in the cell membrane. The catalysed reaction is a 1,2-diacyl-sn-glycero-3-phospho-L-serine + H(+) = a 1,2-diacyl-sn-glycero-3-phosphoethanolamine + CO2. It participates in phospholipid metabolism; phosphatidylethanolamine biosynthesis; phosphatidylethanolamine from CDP-diacylglycerol: step 2/2. Its function is as follows. Catalyzes the formation of phosphatidylethanolamine (PtdEtn) from phosphatidylserine (PtdSer). The polypeptide is Phosphatidylserine decarboxylase proenzyme (Rhodopseudomonas palustris (strain ATCC BAA-98 / CGA009)).